We begin with the raw amino-acid sequence, 462 residues long: MLEKKATRSTRVDGVSGEAVIEEFERVTRDAANVQRETLRRILAENGGVEYLRGLGLAGATDPATFRARVPLATHADLEPYIDRIADGDASPVLTAKPATSISLSSGTTQGKRKYLLFNEELVKSTMQIYRISYAFRNREFPVENGKALQFIYSSRETRTKGGLTATTATTNVYRSEEFKATMRDIQSQCCSPDEVIFGPDFAQSLYCHLLAGLLAAGDVQIVSATFAHSVVLAFQTFERAWEDLCADIRRGEVSPSRVTSPAVRRAMAALLAAPNPGLADEVARKCAALSNWYGVIPALWPNARYVYGIMTGSMEHYVKKLRHYAGGLPLVAAEYGASEGWVGANVEPGTPPERATFTVLPDIAYFEFIPLKPVAGDGGYAEAEPVGLTEVAAGELYEVVMTTFAGNTRSSSSCMTLVAYYYLQSKKWMNICRFCISVHETSRNLVTCTFAATGHIMFAQK.

Residue serine 103 coordinates ATP. Position 106 (serine 106) interacts with jasmonate. ATP-binding positions include threonine 126, asparagine 172, and 337-342 (GASEGW). 170–174 (TTNVY) lines the an L-alpha-amino acid pocket. Jasmonate is bound by residues 334-337 (AEYG) and serine 339.

Belongs to the IAA-amido conjugating enzyme family. As to expression, expressed in green shoots and flowers.

It catalyses the reaction a jasmonate + an L-alpha-amino acid + ATP = a jasmonyl-L-amino acid + AMP + diphosphate + H(+). Catalyzes the synthesis of jasmonate-amino acid conjugates by adenylation. Catalyzes the conjugation of jasmonate (JA) to Ile when expressed in a heterologous system (E.coli). Catalyzes in vitro the conjugation of jasmonate (JA) to Ile, Phe, Leu, Met, Val and Trp. May catalyze the synthesis of indole-3-acetic acid (IAA)-amino acid conjugates, providing a mechanism for the plant to cope with the presence of excess auxin. This Oryza sativa subsp. japonica (Rice) protein is Jasmonoyl--L-amino acid synthetase GH3.3.